The chain runs to 336 residues: Ketoreductase adrE (336 aa).

An NADP(+)-binding site is contributed by Tyr-171.

This sequence belongs to the NAD(P)-dependent epimerase/dehydratase family. Dihydroflavonol-4-reductase subfamily.

The protein operates within secondary metabolite biosynthesis; terpenoid biosynthesis. In terms of biological role, ketoreductase; part of the gene cluster that mediates the biosynthesis of andrastins, meroterpenoid compounds that exhibit inhibitory activity against ras farnesyltransferase, suggesting that they could be promising leads for antitumor agents. The first step of the pathway is the synthesis of 3,5-dimethylorsellinic acid (DMOA) by the polyketide synthase adrD via condensation of one acetyl-CoA starter unit with 3 malonyl-CoA units and 2 methylations. DMAO is then converted to farnesyl-DMAO by the prenyltransferase adrG. The methyltransferase adrK catalyzes the methylation of the carboxyl group of farnesyl-DMAO to farnesyl-DMAO methyl ester which is further converted to epoxyfarnesyl-DMAO methyl ester by the FAD-dependent monooxygenase adrH. The terpene cyclase adrI then catalyzes the carbon skeletal rearrangement to generate the andrastin E, the first compound in the pathway having the andrastin scaffold, with the tetracyclic ring system. The post-cyclization tailoring enzymes adrF, adrE, adrJ, and adrA, are involved in the conversion of andrastin E into andrastin A. The short chain dehydrogenase adrF is responsible for the oxidation of the C-3 a hydroxyl group of andrastin E to yield the corresponding ketone, andrastin D. The ketoreductase adrE stereoselectively reduces the carbonyl moiety to reverse the stereochemistry of the C-3 position to yield andrastin F. The acetyltransferase adrJ is the acetyltransferase that attaches the acetyl group to the C-3 hydroxyl group of andrastin F to yield andrastin C. Finally, the cytochrome P450 monooxygenase adrA catalyzes two sequential oxidation reactions of the C-23 methyl group, to generate the corresponding alcohol andrastin B, and aldehyde andrastin A. This is Ketoreductase adrE from Penicillium rubens (strain ATCC 28089 / DSM 1075 / NRRL 1951 / Wisconsin 54-1255) (Penicillium chrysogenum).